Reading from the N-terminus, the 135-residue chain is Congerin-1 (135 aa).

Residue Ser1 is modified to N-acetylserine. A Galectin domain is found at 3–135; it reads GLQVKNFDFT…GDARLTLVKE (133 aa). Position 70-76 (70-76) interacts with a beta-D-galactoside; that stretch reads WETEQRS.

Homodimer.

This protein binds beta-galactoside. Its physiological function is not yet known. This Conger myriaster (Conger eel) protein is Congerin-1.